The chain runs to 124 residues: Protein YebF (124 aa).

A signal peptide spans M1 to A27. The region spanning K36–L123 is the YebF/Cmi domain. Cysteines 40 and 113 form a disulfide.

It belongs to the YebF family.

It localises to the secreted. The polypeptide is Protein YebF (Photorhabdus laumondii subsp. laumondii (strain DSM 15139 / CIP 105565 / TT01) (Photorhabdus luminescens subsp. laumondii)).